The primary structure comprises 381 residues: Alkanesulfonate monooxygenase (381 aa).

Belongs to the SsuD family. Homotetramer.

It catalyses the reaction an alkanesulfonate + FMNH2 + O2 = an aldehyde + FMN + sulfite + H2O + 2 H(+). Its function is as follows. Catalyzes the desulfonation of aliphatic sulfonates. In Escherichia coli O127:H6 (strain E2348/69 / EPEC), this protein is Alkanesulfonate monooxygenase.